A 220-amino-acid chain; its full sequence is Ribosomal RNA large subunit methyltransferase E (220 aa).

5 residues coordinate S-adenosyl-L-methionine: G60, W62, D92, D108, and D133. Catalysis depends on K173, which acts as the Proton acceptor.

The protein belongs to the class I-like SAM-binding methyltransferase superfamily. RNA methyltransferase RlmE family.

It is found in the cytoplasm. It carries out the reaction uridine(2552) in 23S rRNA + S-adenosyl-L-methionine = 2'-O-methyluridine(2552) in 23S rRNA + S-adenosyl-L-homocysteine + H(+). Its function is as follows. Specifically methylates the uridine in position 2552 of 23S rRNA at the 2'-O position of the ribose in the fully assembled 50S ribosomal subunit. The sequence is that of Ribosomal RNA large subunit methyltransferase E from Paraburkholderia xenovorans (strain LB400).